Consider the following 33-residue polypeptide: Photosystem II reaction center protein Psb30 (33 aa).

Residues 5–25 (VIAQLTVLSLIVLSGPLVIIL) traverse the membrane as a helical segment.

Belongs to the Psb30/Ycf12 family. In terms of assembly, PSII is composed of 1 copy each of membrane proteins PsbA, PsbB, PsbC, PsbD, PsbE, PsbF, PsbH, PsbI, PsbJ, PsbK, PsbL, PsbM, PsbT, PsbX, PsbY, PsbZ, Psb30/Ycf12, peripheral proteins of the oxygen-evolving complex and a large number of cofactors. It forms dimeric complexes.

Its subcellular location is the plastid. The protein resides in the chloroplast thylakoid membrane. In terms of biological role, a core subunit of photosystem II (PSII), probably helps stabilize the reaction center. This Chlorokybus atmophyticus (Soil alga) protein is Photosystem II reaction center protein Psb30.